We begin with the raw amino-acid sequence, 451 residues long: UDP-N-acetylmuramate--L-alanine ligase (451 aa).

110–116 (GTHGKTT) contributes to the ATP binding site.

The protein belongs to the MurCDEF family.

The protein resides in the cytoplasm. The enzyme catalyses UDP-N-acetyl-alpha-D-muramate + L-alanine + ATP = UDP-N-acetyl-alpha-D-muramoyl-L-alanine + ADP + phosphate + H(+). It functions in the pathway cell wall biogenesis; peptidoglycan biosynthesis. Its function is as follows. Cell wall formation. This is UDP-N-acetylmuramate--L-alanine ligase from Francisella tularensis subsp. novicida (strain U112).